Consider the following 208-residue polypeptide: Putative 3-methyladenine DNA glycosylase (208 aa).

This sequence belongs to the DNA glycosylase MPG family.

This chain is Putative 3-methyladenine DNA glycosylase, found in Lactobacillus delbrueckii subsp. bulgaricus (strain ATCC 11842 / DSM 20081 / BCRC 10696 / JCM 1002 / NBRC 13953 / NCIMB 11778 / NCTC 12712 / WDCM 00102 / Lb 14).